The chain runs to 38 residues: Toxin Lqh 8/6 (38 aa).

Intrachain disulfides connect Cys-2/Cys-19, Cys-5/Cys-28, Cys-16/Cys-33, and Cys-20/Cys-35.

Expressed by the venom gland.

It localises to the secreted. Toxin with unknown function in healthy organisms. On glioma cells, interacts with chloride channels (probably ClC-3/CLCN3) and MMP2 at the surface of glioma cells. This complex is then internalized via caveolae, thus inhibiting the chloride channels necessary for cell shrinkage and tumor propagation. The protein is Toxin Lqh 8/6 of Leiurus hebraeus (Hebrew deathstalker scorpion).